The sequence spans 332 residues: ADP-L-glycero-D-manno-heptose-6-epimerase (332 aa).

NADP(+) is bound by residues 11–12 (FI), 32–33 (DN), K39, K54, 76–80 (EGACS), and N93. Catalysis depends on Y140, which acts as the Proton acceptor. K144 contributes to the NADP(+) binding site. Residue N170 coordinates substrate. NADP(+) contacts are provided by V171 and K179. K179 (proton acceptor) is an active-site residue. Substrate contacts are provided by residues R181, H188, 202 to 205 (FEGS), R215, and Y294.

It belongs to the NAD(P)-dependent epimerase/dehydratase family. HldD subfamily. In terms of assembly, homopentamer. It depends on NADP(+) as a cofactor.

The catalysed reaction is ADP-D-glycero-beta-D-manno-heptose = ADP-L-glycero-beta-D-manno-heptose. It functions in the pathway nucleotide-sugar biosynthesis; ADP-L-glycero-beta-D-manno-heptose biosynthesis; ADP-L-glycero-beta-D-manno-heptose from D-glycero-beta-D-manno-heptose 7-phosphate: step 4/4. In terms of biological role, catalyzes the interconversion between ADP-D-glycero-beta-D-manno-heptose and ADP-L-glycero-beta-D-manno-heptose via an epimerization at carbon 6 of the heptose. The chain is ADP-L-glycero-D-manno-heptose-6-epimerase from Dechloromonas aromatica (strain RCB).